The following is a 321-amino-acid chain: Thioredoxin reductase tcpT (321 aa).

FAD-binding positions include 14–17 (GGPA), 36–41 (DSGRYR), His-49, and Ala-114. An intrachain disulfide couples Cys-138 to Cys-141. Residues Asp-282 and 289 to 290 (NV) each bind FAD.

It belongs to the class-II pyridine nucleotide-disulfide oxidoreductase family. In terms of assembly, homodimer. The cofactor is FAD.

Its pathway is secondary metabolite biosynthesis. Functionally, thioredoxin reductase; part of the gene cluster that mediates the biosynthesis of an unusual class of epipolythiodioxopiperazines (ETPs) lacking the reactive thiol group important for toxicity. Firstly, L-tyrosine is prenylated by tcpD, before undergoing condensation with L-glycine in a reaction catalyzed by the NRPS tcpP leading to the diketopiperazine (DKP) backbone. Afterwards the alpha-carbon of tyrosine is oxidized by the cytochrome P450 tcpC to form a hydroxyl group. However, in contrast other ETP biosynthesis pathways studied so far, tcpC is not able to bishydroxylate the DKP at both alpha-carbon positions, but hydroxylates the alpha-carbon of the tyrosine part and the nitrogen of the glycine part. The next steps involve an alpha,beta-elimination reaction catalyzed by tcpI, a methylation by the methyltransferase tcpN the action of the four enzyme cascade tcpG/K/J/I. Due to a dysfunctional cytochrome P450 monooxygenase tcpC, the pathway leads to the biosynthesis of probable non-toxic metabolites lacking the reactive thiol group. This chain is Thioredoxin reductase tcpT, found in Claviceps purpurea (strain 20.1) (Ergot fungus).